Reading from the N-terminus, the 457-residue chain is Argininosuccinate lyase (457 aa).

This sequence belongs to the lyase 1 family. Argininosuccinate lyase subfamily.

Its subcellular location is the cytoplasm. The catalysed reaction is 2-(N(omega)-L-arginino)succinate = fumarate + L-arginine. It functions in the pathway amino-acid biosynthesis; L-arginine biosynthesis; L-arginine from L-ornithine and carbamoyl phosphate: step 3/3. This chain is Argininosuccinate lyase, found in Escherichia coli O157:H7 (strain EC4115 / EHEC).